We begin with the raw amino-acid sequence, 420 residues long: POU domain, class 4, transcription factor 1 (420 aa).

The short motif at 57-66 (RAEALAAVDI) is the POU-IV box element. Disordered stretches follow at residues 94 to 117 (STVPLAHHHHHHHHHQALEPGDLL) and 132 to 200 (GGAG…XGHL). Over residues 99-108 (AHHHHHHHHH) the composition is skewed to basic residues. 2 stretches are compositionally biased toward gly residues: residues 132-165 (GGAGAAGGGGAPTRPRGAGGPGGGGGPGGGGPGV) and 172-184 (PGGGGGGPGGGLL). The POU-specific domain occupies 261–338 (DSDTDPRELE…ILQAWLEEAE (78 aa)). Residues 356 to 415 (KKRKRTSIAAPEKRSLEAYFAVQPRPSSEKIAAIAEKLDLKKNVVRVWFCNQRQKQKRMK) constitute a DNA-binding region (homeobox).

It belongs to the POU transcription factor family. Class-4 subfamily. In terms of assembly, interacts (via N-terminus) with RIT2; the interaction controls POU4F1 transactivation activity on some neuronal target genes. Isoform 1 interacts with POU4F2; this interaction inhibits both POU4F1 DNA-binding and transcriptional activities. Isoform 1 interacts (C-terminus) with ESR1 (via DNA-binding domain); this interaction decreases the estrogen receptor ESR1 transcriptional activity in a DNA- and ligand 17-beta-estradiol-independent manner. As to expression, detected in brain, spinal cord and dorsal root ganglion. Isoform 2 is detected in brain, spinal cord, dorsal root ganglion and spleen.

It localises to the nucleus. The protein localises to the cytoplasm. Its function is as follows. Multifunctional transcription factor with different regions mediating its different effects. Acts by binding (via its C-terminal domain) to sequences related to the consensus octamer motif 5'-ATGCAAAT-3' in the regulatory regions of its target genes. Regulates the expression of specific genes involved in differentiation and survival within a subset of neuronal lineages. It has been shown that activation of some of these genes requires its N-terminal domain, maybe through a neuronal-specific cofactor. Activates BCL2 expression and protects neuronal cells from apoptosis (via the N-terminal domain). Induces neuronal process outgrowth and the coordinate expression of genes encoding synaptic proteins. Exerts its major developmental effects in somatosensory neurons and in brainstem nuclei involved in motor control. Stimulates the binding affinity of the nuclear estrogene receptor ESR1 to DNA estrogen response element (ERE), and hence modulates ESR1-induced transcriptional activity. May positively regulate POU4F2 and POU4F3. Regulates dorsal root ganglion sensory neuron specification and axonal projection into the spinal cord. Plays a role in TNFSF11-mediated terminal osteoclast differentiation. Negatively regulates its own expression interacting directly with a highly conserved autoregulatory domain surrounding the transcription initiation site. Able to act as transcription factor, cannot regulate the expression of the same subset of genes than isoform 1. Does not have anitapoptotic effect on neuronal cells. The polypeptide is POU domain, class 4, transcription factor 1 (Pou4f1) (Rattus norvegicus (Rat)).